Consider the following 651-residue polypeptide: Bromodomain-containing protein 7 (651 aa).

Residue K21 forms a Glycyl lysine isopeptide (Lys-Gly) (interchain with G-Cter in SUMO2) linkage. Positions 35–45 are enriched in polar residues; it reads TELSTGSSGHD. The tract at residues 35-132 is disordered; sequence TELSTGSSGH…SSLAKQEEVE (98 aa). Positions 47–57 are enriched in basic and acidic residues; that stretch reads SLFEDKNDHDK. A Glycyl lysine isopeptide (Lys-Gly) (interchain with G-Cter in SUMO2) cross-link involves residue K52. A compositionally biased stretch (basic residues) spans 58–69; it reads HKDRKRKKRKKG. The short motif at 65–96 is the Nuclear localization signal element; sequence KRKKGEKQIPGEEKGRKRRRVKEDKKKRDRDR. Positions 70–106 are enriched in basic and acidic residues; sequence EKQIPGEEKGRKRRRVKEDKKKRDRDRVENEAEKDLQ. Residues K127, K186, K197, K201, K212, and K241 each participate in a glycyl lysine isopeptide (Lys-Gly) (interchain with G-Cter in SUMO2) cross-link. In terms of domain architecture, Bromo spans 131–235; sequence VEQTPLQEAL…HSGMKILSQE (105 aa). The tract at residues 253–301 is disordered; that stretch reads TRKQKDGTDTSQSGEDGGCWQREREDSGDAEAHAFKSPSKENKKKDKDM. Residues 273–301 show a composition bias toward basic and acidic residues; the sequence is QREREDSGDAEAHAFKSPSKENKKKDKDM. Phosphoserine is present on residues S279 and S289. Glycyl lysine isopeptide (Lys-Gly) (interchain with G-Cter in SUMO2) cross-links involve residues K305 and K307. Position 328 is an N6-acetyllysine (K328). K344 is covalently cross-linked (Glycyl lysine isopeptide (Lys-Gly) (interchain with G-Cter in SUMO2)). S380 carries the phosphoserine modification. Residue K389 forms a Glycyl lysine isopeptide (Lys-Gly) (interchain with G-Cter in SUMO2) linkage. Phosphoserine is present on S482. A Phosphothreonine modification is found at T514. Positions 536 to 567 form a coiled coil; that stretch reads SEEAEIFQKKLDETTRLLRELQEAQNERLSTR. Phosphoserine is present on S621.

In terms of assembly, interacts with TRIM24, PTPN13 and DVL1. Identified in a complex with SMARCA4/BRG1, SMARCC1/BAF155, SMARCE1/BAF57, DPF2/BAF45D and ARID2, subunits of the SWI/SNF-B (PBAF) chromatin remodeling complex. Interacts with IRF2 and HNRPUL1. Interacts (via N-terminus) with TP53. Interacts (via C-terminus) with EP300. Interacts with BRCA1. Interacts (via bromo domain) with histone H3 (via N-terminus) acetylated at 'Lys-14' (H3K14ac). Has low affinity for histone H3 acetylated at 'Lys-9' (H3K9ac). Has the highest affinity for histone H3 that is acetylated both at 'Lys-9' (H3K9ac) and at 'Lys-14' (H3K14ac). Has very low affinity for non-acetylated histone H3. Interacts (via bromo domain) with histone H4 (via N-terminus) acetylated at 'Lys-8' (H3K8ac) (in vitro).

It localises to the nucleus. The protein localises to the chromosome. Its function is as follows. Acts both as coactivator and as corepressor. May play a role in chromatin remodeling. Activator of the Wnt signaling pathway in a DVL1-dependent manner by negatively regulating the GSK3B phosphotransferase activity. Induces dephosphorylation of GSK3B at 'Tyr-216'. Down-regulates TRIM24-mediated activation of transcriptional activation by AR. Transcriptional corepressor that down-regulates the expression of target genes. Binds to target promoters, leading to increased histone H3 acetylation at 'Lys-9' (H3K9ac). Binds to the ESR1 promoter. Recruits BRCA1 and POU2F1 to the ESR1 promoter. Coactivator for TP53-mediated activation of transcription of a set of target genes. Required for TP53-mediated cell-cycle arrest in response to oncogene activation. Promotes acetylation of TP53 at 'Lys-382', and thereby promotes efficient recruitment of TP53 to target promoters. Inhibits cell cycle progression from G1 to S phase. In Homo sapiens (Human), this protein is Bromodomain-containing protein 7 (BRD7).